A 456-amino-acid polypeptide reads, in one-letter code: Phytase A (456 aa).

A signal peptide spans 1–24 (MSSMASVLFAALAISGVQVTPSRG). 1D-myo-inositol hexakisphosphate-binding residues include Gln-37, Tyr-38, Arg-68, His-69, Arg-72, Thr-75, and Arg-152. 4 disulfide bridges follow: Cys-58/Cys-396, Cys-197/Cys-450, Cys-246/Cys-264, and Cys-421/Cys-429. Catalysis depends on His-69, which acts as the Nucleophile. Lys-283 serves as a coordination point for 1D-myo-inositol hexakisphosphate. A glycan (N-linked (GlcNAc...) asparagine) is linked at Asn-317. Residues His-343 and Asp-344 each coordinate 1D-myo-inositol hexakisphosphate. The N-linked (GlcNAc...) asparagine glycan is linked to Asn-358.

It belongs to the histidine acid phosphatase family. In terms of assembly, monomer.

Its subcellular location is the secreted. The enzyme catalyses 1D-myo-inositol hexakisphosphate + H2O = 1D-myo-inositol 1,2,4,5,6-pentakisphosphate + phosphate. It carries out the reaction 1D-myo-inositol 1,2,4,5,6-pentakisphosphate + H2O = 1D-myo-inositol 1,2,5,6-tetrakisphosphate + phosphate. It catalyses the reaction 1D-myo-inositol 1,2,5,6-tetrakisphosphate + H2O = 1D-myo-inositol 1,2,6-trisphosphate + phosphate. The catalysed reaction is 1D-myo-inositol 1,2,6-trisphosphate + H2O = 1D-myo-inositol 1,2-bisphosphate + phosphate. The enzyme catalyses 1D-myo-inositol 1,2-bisphosphate + H2O = 1D-myo-inositol 2-phosphate + phosphate. Functionally, catalyzes the phosphate monoester hydrolysis of phytic acid (myo-inositol hexakisphosphate), which results in the stepwise formation of myo-inositol pentakis-, tetrakis-, tris-, bis-, and monophosphates, as well as the liberation of inorganic phosphate. Myo-inositol 2-monophosphate is the end product. This chain is Phytase A, found in Arthroderma benhamiae (strain ATCC MYA-4681 / CBS 112371) (Trichophyton mentagrophytes).